Consider the following 378-residue polypeptide: Cell surface mannoprotein MP65 (378 aa).

Residues M1–R32 form the signal peptide. The segment at V67 to G124 is disordered. Over residues N72–P93 the composition is skewed to polar residues. The span at S94–E116 shows a compositional bias: low complexity. The Nucleophile role is filled by E316.

The protein belongs to the glycosyl hydrolase 17 family. As to quaternary structure, component of a multiprotein complex of 250 kDa composed of at least HYR1, MP65, and PRA1. Glycosylated protein with a polysaccharide moiety composed exclusively of mannose and glucose at a ratio of 12.7 to 1. Contributes highly to the carbohydrate component of the matrix. Treatment with tunicamycin impairs glycosylation.

Its subcellular location is the secreted. It is found in the cell wall. Surface mannoprotein required for hyphal morphogenesis, surface adherence, and pathogenicity. Contributes in a high proportion to the carbohydrate component of the matrix due to high levels of glycosylation and may play important roles during biofilm development and maintenance. Acts as a major antigen target of host cell-mediated immune response. Induces extensive T-cell proliferation of human peripheral blood mononuclear cells. Facilitates host dendritic cells maturation and promotes cytokine production through its glycosylated portion while its protein core is essentially involved in induction of T-cell response. The protein is Cell surface mannoprotein MP65 (MP65) of Candida albicans (strain SC5314 / ATCC MYA-2876) (Yeast).